The sequence spans 501 residues: DDB1- and CUL4-associated factor 12-like protein 1 (501 aa).

A compositionally biased stretch (polar residues) spans 1–37 (MRQADSQTQPSPAEQETPQPAGPSNRSPPTMGPQQTG). The tract at residues 1-67 (MRQADSQTQP…PAAPMATAGE (67 aa)) is disordered. WD repeat units follow at residues 185-225 (PPSC…PVCL), 230-268 (GHRD…FNGS), 298-337 (PGNR…SRLL), and 384-423 (SREG…FLEE).

Belongs to the WD repeat DCAF12 family.

The polypeptide is DDB1- and CUL4-associated factor 12-like protein 1 (Dcaf12l1) (Mus musculus (Mouse)).